The chain runs to 546 residues: Chromosomal replication initiator protein DnaA (546 aa).

The tract at residues 1-85 (MSDPQAALRA…TRALSQHMGR (85 aa)) is domain I, interacts with DnaA modulators. The segment at 85–204 (RPCSLAVTIA…EPAHNPNREK (120 aa)) is domain II. Over residues 96 to 111 (PPQPAPQEEPPAPAPQ) the composition is skewed to pro residues. Residues 96-209 (PPQPAPQEEP…PNREKSLNPK (114 aa)) are disordered. Residues 126 to 145 (QTQAFQQPTQSTQPAPASQP) are compositionally biased toward low complexity. Residues 191 to 209 (IPREEPAHNPNREKSLNPK) are compositionally biased toward basic and acidic residues. The segment at 205–421 (SLNPKHTFEN…GALIRVSAYS (217 aa)) is domain III, AAA+ region. ATP is bound by residues Gly-249, Gly-251, Lys-252, and Thr-253. Residues 422–546 (SLVNEPISLE…TQRVKNHNQR (125 aa)) form a domain IV, binds dsDNA region.

Belongs to the DnaA family. In terms of assembly, oligomerizes as a right-handed, spiral filament on DNA at oriC.

It is found in the cytoplasm. Its function is as follows. Plays an essential role in the initiation and regulation of chromosomal replication. ATP-DnaA binds to the origin of replication (oriC) to initiate formation of the DNA replication initiation complex once per cell cycle. Binds the DnaA box (a 9 base pair repeat at the origin) and separates the double-stranded (ds)DNA. Forms a right-handed helical filament on oriC DNA; dsDNA binds to the exterior of the filament while single-stranded (ss)DNA is stabiized in the filament's interior. The ATP-DnaA-oriC complex binds and stabilizes one strand of the AT-rich DNA unwinding element (DUE), permitting loading of DNA polymerase. After initiation quickly degrades to an ADP-DnaA complex that is not apt for DNA replication. Binds acidic phospholipids. The protein is Chromosomal replication initiator protein DnaA of Corynebacterium aurimucosum (strain ATCC 700975 / DSM 44827 / CIP 107346 / CN-1) (Corynebacterium nigricans).